Consider the following 513-residue polypeptide: Probable DNA ligase (513 aa).

E213 lines the ATP pocket. The active-site N6-AMP-lysine intermediate is K215. R220, R235, E264, F304, R376, and K382 together coordinate ATP.

It belongs to the ATP-dependent DNA ligase family. It depends on Mg(2+) as a cofactor.

The enzyme catalyses ATP + (deoxyribonucleotide)n-3'-hydroxyl + 5'-phospho-(deoxyribonucleotide)m = (deoxyribonucleotide)n+m + AMP + diphosphate.. DNA ligase that seals nicks in double-stranded DNA during DNA replication, DNA recombination and DNA repair. The sequence is that of Probable DNA ligase from Anaeromyxobacter sp. (strain K).